Here is a 151-residue protein sequence, read N- to C-terminus: MLP-like protein 329 (151 aa).

Belongs to the MLP family.

This is MLP-like protein 329 (MLP329) from Arabidopsis thaliana (Mouse-ear cress).